A 330-amino-acid polypeptide reads, in one-letter code: Ferrochelatase (330 aa).

Fe cation is bound by residues H200 and E281.

Belongs to the ferrochelatase family.

Its subcellular location is the cytoplasm. It catalyses the reaction heme b + 2 H(+) = protoporphyrin IX + Fe(2+). It functions in the pathway porphyrin-containing compound metabolism; protoheme biosynthesis; protoheme from protoporphyrin-IX: step 1/1. Catalyzes the ferrous insertion into protoporphyrin IX. The protein is Ferrochelatase of Marinomonas sp. (strain MWYL1).